Reading from the N-terminus, the 257-residue chain is Probable amino-acid ABC transporter-binding protein HI_1080 (257 aa).

A signal peptide spans 1–23 (MKKLLFTTALLTGAIAFSTFSHA).

This sequence belongs to the bacterial solute-binding protein 3 family.

The protein resides in the periplasm. Probably part of a binding-protein-dependent transport system for an amino acid. In Haemophilus influenzae (strain ATCC 51907 / DSM 11121 / KW20 / Rd), this protein is Probable amino-acid ABC transporter-binding protein HI_1080.